A 386-amino-acid polypeptide reads, in one-letter code: 8-amino-7-oxononanoate synthase (386 aa).

Residues Arg-22 and Arg-29 each contribute to the substrate site. 109–110 provides a ligand contact to pyridoxal 5'-phosphate; the sequence is GY. His-134 serves as a coordination point for substrate. Residues Ser-182, 207-210, and 237-240 contribute to the pyridoxal 5'-phosphate site; these read DDAH and TLSK. Lys-240 carries the post-translational modification N6-(pyridoxal phosphate)lysine. Thr-349 contacts substrate.

Belongs to the class-II pyridoxal-phosphate-dependent aminotransferase family. BioF subfamily. Homodimer. Pyridoxal 5'-phosphate is required as a cofactor.

The catalysed reaction is 6-carboxyhexanoyl-[ACP] + L-alanine + H(+) = (8S)-8-amino-7-oxononanoate + holo-[ACP] + CO2. The protein operates within cofactor biosynthesis; biotin biosynthesis. Its function is as follows. Catalyzes the decarboxylative condensation of pimeloyl-[acyl-carrier protein] and L-alanine to produce 8-amino-7-oxononanoate (AON), [acyl-carrier protein], and carbon dioxide. This chain is 8-amino-7-oxononanoate synthase, found in Beijerinckia indica subsp. indica (strain ATCC 9039 / DSM 1715 / NCIMB 8712).